A 462-amino-acid polypeptide reads, in one-letter code: Lysyl endopeptidase (462 aa).

Residues 1–24 (MHKRTYLNACLVLALAAGASQALA) form the signal peptide. Positions 25 to 211 (APGASEMAGD…VSYFADSLYK (187 aa)) are excised as a propeptide. 3 disulfide bridges follow: cysteine 224–cysteine 435, cysteine 230–cysteine 305, and cysteine 262–cysteine 284. Active-site charge relay system residues include histidine 283, aspartate 333, and serine 409.

It belongs to the peptidase S1 family. Post-translationally, experiments performed in E.coli. Processing of pro-endopeptidase to mature endopeptidase is probably autocatalytic, as mutations in the probable active site residues prevent processing, and purified inactive pro-endopeptidase disappears in the presence of active endopeptidase.

It localises to the secreted. The enzyme catalyses Preferential cleavage: Lys-|-Xaa, including Lys-|-Pro.. Its function is as follows. Lysine-specific endoprotease. Involved in corneal virulence. This is Lysyl endopeptidase (prpL) from Pseudomonas aeruginosa (strain ATCC 15692 / DSM 22644 / CIP 104116 / JCM 14847 / LMG 12228 / 1C / PRS 101 / PAO1).